The sequence spans 238 residues: Ribosomal RNA small subunit methyltransferase G (238 aa).

S-adenosyl-L-methionine-binding positions include glycine 79, phenylalanine 84, 102 to 104 (EAT), 130 to 131 (IE), and arginine 149.

Belongs to the methyltransferase superfamily. RNA methyltransferase RsmG family.

It localises to the cytoplasm. Specifically methylates the N7 position of a guanine in 16S rRNA. In Chloroflexus aggregans (strain MD-66 / DSM 9485), this protein is Ribosomal RNA small subunit methyltransferase G.